Here is a 218-residue protein sequence, read N- to C-terminus: MIEEKLKKQAAWAAIKYIKPGDIVGVGSGSTAEYFIDALGSIKNLIKGTVSSSRISSSKLKDLNIPLFDLNEVSLLNIYVDGADEINQKKHMIKGKGAALTREKIIASAAKKFICIVDSSKFVHVLGRAPLPIEVIPMARTLVSKKIIDIGGSPKYRKGIITENGNVLLDVHNLIILDSLFLEEKINNIPGVVSVGLFAHRAADIAIISGKNGIKIID.

Residues 28-31 (SGST), 81-84 (DGAD), and 94-97 (KGKG) contribute to the substrate site. The active-site Proton acceptor is Glu-103. Residue Lys-121 participates in substrate binding.

It belongs to the ribose 5-phosphate isomerase family. As to quaternary structure, homodimer.

It catalyses the reaction aldehydo-D-ribose 5-phosphate = D-ribulose 5-phosphate. It participates in carbohydrate degradation; pentose phosphate pathway; D-ribose 5-phosphate from D-ribulose 5-phosphate (non-oxidative stage): step 1/1. Its function is as follows. Catalyzes the reversible conversion of ribose-5-phosphate to ribulose 5-phosphate. The protein is Ribose-5-phosphate isomerase A of Wigglesworthia glossinidia brevipalpis.